Consider the following 119-residue polypeptide: Large ribosomal subunit protein bL19 (119 aa).

It belongs to the bacterial ribosomal protein bL19 family.

In terms of biological role, this protein is located at the 30S-50S ribosomal subunit interface and may play a role in the structure and function of the aminoacyl-tRNA binding site. This chain is Large ribosomal subunit protein bL19, found in Idiomarina loihiensis (strain ATCC BAA-735 / DSM 15497 / L2-TR).